A 597-amino-acid polypeptide reads, in one-letter code: Aspartate--tRNA(Asp/Asn) ligase (597 aa).

Position 182 (glutamate 182) interacts with L-aspartate. Positions 206 to 209 are aspartate; that stretch reads QLFK. Position 228 (arginine 228) interacts with L-aspartate. Residues 228-230 and glutamine 237 contribute to the ATP site; that span reads RDE. Residue histidine 455 coordinates L-aspartate. Residue glutamate 489 coordinates ATP. Arginine 496 is a binding site for L-aspartate. 541–544 is an ATP binding site; it reads GFDR.

The protein belongs to the class-II aminoacyl-tRNA synthetase family. Type 1 subfamily. As to quaternary structure, homodimer.

It localises to the cytoplasm. The catalysed reaction is tRNA(Asx) + L-aspartate + ATP = L-aspartyl-tRNA(Asx) + AMP + diphosphate. Its function is as follows. Aspartyl-tRNA synthetase with relaxed tRNA specificity since it is able to aspartylate not only its cognate tRNA(Asp) but also tRNA(Asn). Reaction proceeds in two steps: L-aspartate is first activated by ATP to form Asp-AMP and then transferred to the acceptor end of tRNA(Asp/Asn). The sequence is that of Aspartate--tRNA(Asp/Asn) ligase from Desulfosudis oleivorans (strain DSM 6200 / JCM 39069 / Hxd3) (Desulfococcus oleovorans).